We begin with the raw amino-acid sequence, 261 residues long: Recombination protein bet (261 aa).

Gene bet protein functions in general recombination and in the late, rolling-circle mode of lambda DNA replication. Has a function similar to that of E.coli recT. It is a single-stranded DNA binding protein that can promote renaturation of DNA. In Escherichia coli (Bacteriophage lambda), this protein is Recombination protein bet (bet).